Here is a 1007-residue protein sequence, read N- to C-terminus: Bifunctional glutamine synthetase adenylyltransferase/adenylyl-removing enzyme (1007 aa).

The interval 1 to 496 (MTREQLSLTV…LHERLFYRPL (496 aa)) is adenylyl removase. Residues 505–1007 (NEDARLSGEA…GPPQRPATTA (503 aa)) form an adenylyl transferase region.

The protein belongs to the GlnE family. Requires Mg(2+) as cofactor.

It catalyses the reaction [glutamine synthetase]-O(4)-(5'-adenylyl)-L-tyrosine + phosphate = [glutamine synthetase]-L-tyrosine + ADP. The enzyme catalyses [glutamine synthetase]-L-tyrosine + ATP = [glutamine synthetase]-O(4)-(5'-adenylyl)-L-tyrosine + diphosphate. Its function is as follows. Involved in the regulation of glutamine synthetase GlnA, a key enzyme in the process to assimilate ammonia. When cellular nitrogen levels are high, the C-terminal adenylyl transferase (AT) inactivates GlnA by covalent transfer of an adenylyl group from ATP to specific tyrosine residue of GlnA, thus reducing its activity. Conversely, when nitrogen levels are low, the N-terminal adenylyl removase (AR) activates GlnA by removing the adenylyl group by phosphorolysis, increasing its activity. The regulatory region of GlnE binds the signal transduction protein PII (GlnB) which indicates the nitrogen status of the cell. The sequence is that of Bifunctional glutamine synthetase adenylyltransferase/adenylyl-removing enzyme from Leifsonia xyli subsp. xyli (strain CTCB07).